We begin with the raw amino-acid sequence, 788 residues long: Ciliated left-right organizer metallopeptidase (788 aa).

The N-terminal stretch at 1–20 is a signal peptide; sequence MLLLLLLLLLLPPLVLRVAA. The Extracellular portion of the chain corresponds to 21–735; sequence SRCLHDETQK…DHNPSMTHLR (715 aa). A compositionally biased stretch (low complexity) spans 40–56; it reads SQLPSKSRSSSLTLPSS. A disordered region spans residues 40–59; that stretch reads SQLPSKSRSSSLTLPSSRDP. His-305 contributes to the Zn(2+) binding site. Glu-306 is an active-site residue. His-309 contributes to the Zn(2+) binding site. Asn-333 carries an N-linked (GlcNAc...) asparagine glycan. Residue His-385 participates in Zn(2+) binding. N-linked (GlcNAc...) asparagine glycosylation is found at Asn-425, Asn-491, Asn-524, and Asn-713. The helical transmembrane segment at 736-756 threads the bilayer; it reads LSMGLCLMLLILVGVMGTTAY. Topologically, residues 757–788 are cytoplasmic; sequence QKRATLPVRPSASYHSPELHSTRVPVRGIREV. Residues 767-788 are disordered; that stretch reads SASYHSPELHSTRVPVRGIREV.

Belongs to the peptidase M8 family. It depends on Zn(2+) as a cofactor.

It is found in the membrane. Its function is as follows. Putative metalloproteinase that plays a role in left-right patterning process. This Homo sapiens (Human) protein is Ciliated left-right organizer metallopeptidase.